The chain runs to 162 residues: Shikimate kinase (162 aa).

11–16 lines the ATP pocket; that stretch reads GSGKSS. Residue S15 participates in Mg(2+) binding. Positions 33, 57, and 80 each coordinate substrate. ATP is bound at residue R116. R132 serves as a coordination point for substrate.

It belongs to the shikimate kinase family. As to quaternary structure, monomer. The cofactor is Mg(2+).

Its subcellular location is the cytoplasm. The catalysed reaction is shikimate + ATP = 3-phosphoshikimate + ADP + H(+). It functions in the pathway metabolic intermediate biosynthesis; chorismate biosynthesis; chorismate from D-erythrose 4-phosphate and phosphoenolpyruvate: step 5/7. In terms of biological role, catalyzes the specific phosphorylation of the 3-hydroxyl group of shikimic acid using ATP as a cosubstrate. The polypeptide is Shikimate kinase (Helicobacter pylori (strain Shi470)).